Consider the following 279-residue polypeptide: Octanoyl-[GcvH]:protein N-octanoyltransferase (279 aa).

The BPL/LPL catalytic domain maps to 41–247; that stretch reads DLSCNVVRTW…ALKDLGANLN (207 aa). Cysteine 146 serves as the catalytic Acyl-thioester intermediate.

Belongs to the octanoyltransferase LipL family.

The enzyme catalyses N(6)-octanoyl-L-lysyl-[glycine-cleavage complex H protein] + L-lysyl-[lipoyl-carrier protein] = N(6)-octanoyl-L-lysyl-[lipoyl-carrier protein] + L-lysyl-[glycine-cleavage complex H protein]. The protein operates within protein modification; protein lipoylation via endogenous pathway; protein N(6)-(lipoyl)lysine from octanoyl-[acyl-carrier-protein]. Catalyzes the amidotransfer (transamidation) of the octanoyl moiety from octanoyl-GcvH to the lipoyl domain of the E2 subunit of lipoate-dependent enzymes. This Staphylococcus epidermidis (strain ATCC 35984 / DSM 28319 / BCRC 17069 / CCUG 31568 / BM 3577 / RP62A) protein is Octanoyl-[GcvH]:protein N-octanoyltransferase.